Reading from the N-terminus, the 396-residue chain is 2-methyl-aconitate isomerase (396 aa).

Residues S19 and 66–70 (SSTSK) contribute to the substrate site. C104 functions as the Proton donor/acceptor in the catalytic mechanism. Cysteine sulfinic acid (-SO2H) is present on C104. Residues N106, K278, S309, and H314 each coordinate substrate. M318 functions as the Proton donor/acceptor in the catalytic mechanism. Substrate is bound at residue G319.

It belongs to the PrpF family. As to quaternary structure, homodimer.

It catalyses the reaction 2-methyl-trans-aconitate = 2-methyl-cis-aconitate. It functions in the pathway organic acid metabolism; propanoate degradation. Catalyzes the isomerization of 2-methyl-trans-aconitate to yield 2-methyl-cis-aconitate through a base-catalyzed proton abstraction coupled with a rotation about C2-C3 bond of 2-methyl-aconitate. The protein is 2-methyl-aconitate isomerase of Cupriavidus necator (Alcaligenes eutrophus).